Here is a 727-residue protein sequence, read N- to C-terminus: MDDDDELLLNFAAPDTSSVAASKNQNVKVSGGRWKDRRKLQLALQGRTKKRQPETGVNLIPVDESKRKRDSEDKVQLDSNKRSKFTESKGENGGKGDSYVSSLFTNNQPTSHLAPTSTTKELTYLPSNAPMKDATNFSGLGLNEKLSIHLTDHLRFMHPTKIQQLVIPSLISTENDLFVKAQTGSGKTLAFVLPIFHKLMRENKFKINRESGLFAIILTPTRELATQIYGVLETLTRCHHWIVPGIVIGGEKKKSEKARLRKGCNILVATPGRLADHLENTKTLDISQLRWLVLDEGDKLMELGFEDTIAQITAKIDSNSKIADTAEKWQGLPSRRINMLCSATLHSNVKKLGSIVLKDPEMISVETASVAGTVSFDETIATTTSTAPDQLIQNVVVVPPKLRLVTLDALLLKISKHSAERTIVFFSCSDSVDFHFDVFTRDGKKFKKVTDEETGEVKTVLVSPEDDENDGLLTAPQLSDNTIIYKLHGSLSQQTRASTLQSFVKDNNSYNKILFCTDVASRGLDLPNVANVIEYDPPFTIDDHLHRIGRSARLGNEGNATLFLLPGIEEGYVDGKLRVAHPREGNLRVKNYEKILQEGFAQGNIKSKDNKLGKWDIHATTWHLDVERWLLEDQASHDEAVRAFTSHIRAYATHLSSEREFFNVKLLHLGHLAKSFGLRETPKKLGKSVGNNSNYSESKKGKKEDPRKKMLRMAKMAVKSASSEFNY.

The interval 14–119 (PDTSSVAASK…TSHLAPTSTT (106 aa)) is disordered. The segment covering 15-28 (DTSSVAASKNQNVK) has biased composition (polar residues). Residues 63–94 (DESKRKRDSEDKVQLDSNKRSKFTESKGENGG) show a composition bias toward basic and acidic residues. A compositionally biased stretch (polar residues) spans 99 to 119 (YVSSLFTNNQPTSHLAPTSTT). Positions 135–164 (TNFSGLGLNEKLSIHLTDHLRFMHPTKIQQ) match the Q motif motif. The 196-residue stretch at 168–363 (PSLISTENDL…SIVLKDPEMI (196 aa)) folds into the Helicase ATP-binding domain. ATP is bound at residue 181 to 188 (AQTGSGKT). Positions 295-298 (DEGD) match the DEAD box motif. The region spanning 406-613 (TLDALLLKIS…NIKSKDNKLG (208 aa)) is the Helicase C-terminal domain. A disordered region spans residues 683-727 (KKLGKSVGNNSNYSESKKGKKEDPRKKMLRMAKMAVKSASSEFNY). The segment covering 697 to 708 (ESKKGKKEDPRK) has biased composition (basic and acidic residues).

The protein belongs to the DEAD box helicase family. DDX31/DBP7 subfamily.

Its subcellular location is the nucleus. It is found in the nucleolus. The catalysed reaction is ATP + H2O = ADP + phosphate + H(+). In terms of biological role, ATP-binding RNA helicase involved in the biogenesis of 60S ribosomal subunits and is required for the normal formation of 25S and 5.8S rRNAs. This chain is ATP-dependent RNA helicase DBP7 (DBP7), found in Candida albicans (strain SC5314 / ATCC MYA-2876) (Yeast).